A 403-amino-acid polypeptide reads, in one-letter code: 4-hydroxyphenylpyruvate dioxygenase (403 aa).

VOC domains follow at residues Gly25 to Arg169 and Arg201 to Lys359. 3 residues coordinate Fe cation: His204, His287, and Glu370.

It belongs to the 4HPPD family. As to quaternary structure, homodimer. Requires Fe cation as cofactor.

The catalysed reaction is 3-(4-hydroxyphenyl)pyruvate + O2 = homogentisate + CO2. The protein operates within amino-acid degradation; L-phenylalanine degradation; acetoacetate and fumarate from L-phenylalanine: step 3/6. In terms of biological role, 4-hydroxyphenylpyruvate dioxygenase; part of the L-tyrosine degradation gene cluster that mediates the biosynthesis of the brownish pigment pyomelanin as an alternative melanin. The 4-hydroxyphenylpyruvate dioxygenase hppD catalyzes the conversion of 4-hydroxyphenylpyruvate to homogentisic acid (HGA). The protein hmgX is crucial for this conversion and thus, probably functions as an accessory factor to mediate specific activity of hppD. The homogentisate 1,2-dioxygenase hmgA is then involved in the cleavage of the aromatic ring of HGA and its conversion to 4-maleylacetoacetate. When hmgA activity is lowered by the cell wall integrity (CWI) signaling pathway, HGA accumulates and leads to the production of pyomelanin through benzoquinone acetic acid after oxidation and polymerization. On the opposite, in non-stress conditions, both hppD and hmgA activities are balanced and HGA is degraded into 4-maleylacetoacetate. 4-maleylacetoacetate is further converted to 4-fumarylacetoacetate by the maleylacetoacetate isomerase maiA, which is degraded into fumarate and acetoacetate by the fumarylacetoacetase fahA. The sequence is that of 4-hydroxyphenylpyruvate dioxygenase from Aspergillus fumigatus (strain ATCC MYA-4609 / CBS 101355 / FGSC A1100 / Af293) (Neosartorya fumigata).